Here is a 192-residue protein sequence, read N- to C-terminus: Ras-like protein RAS2 (192 aa).

15 to 22 (GGGGVGKS) is a GTP binding site. Residues 37–45 (YDPTIEDSY) carry the Effector region motif. Residues 62–66 (DTAGQ) and 121–124 (NKSD) contribute to the GTP site. Position 189 is a cysteine methyl ester (cysteine 189). Cysteine 189 carries S-geranylgeranyl cysteine lipidation. The propeptide at 190–192 (IVL) is removed in mature form.

Belongs to the small GTPase superfamily. Ras family.

It localises to the cell membrane. It catalyses the reaction GTP + H2O = GDP + phosphate + H(+). Its activity is regulated as follows. Alternates between an inactive form bound to GDP and an active form bound to GTP. Activated by a guanine nucleotide-exchange factor (GEF) and inactivated by a GTPase-activating protein (GAP). In terms of biological role, ras proteins bind GDP/GTP and possess intrinsic GTPase activity. The protein is Ras-like protein RAS2 (RAS2) of Hydra vulgaris (Hydra).